Consider the following 875-residue polypeptide: Aminopeptidase M1-B (875 aa).

The segment at 96–203 (IGEGVLKMDF…MSTYLVAIVV (108 aa)) is required for membrane association. Substrate is bound by residues E136 and 269 to 273 (GAMEN). H305 provides a ligand contact to Zn(2+). Residue E306 is the Proton acceptor of the active site. 2 residues coordinate Zn(2+): H309 and E328. The Dileucine internalization motif motif lies at 722–723 (LL).

It belongs to the peptidase M1 family. Homodimer. Requires Zn(2+) as cofactor.

The protein localises to the membrane. Its subcellular location is the microsome membrane. It localises to the cytoplasm. It carries out the reaction Release of an N-terminal amino acid, Xaa-|-Yaa- from a peptide, amide or arylamide. Xaa is preferably Ala, but may be most amino acids including Pro (slow action). When a terminal hydrophobic residue is followed by a prolyl residue, the two may be released as an intact Xaa-Pro dipeptide.. This is Aminopeptidase M1-B from Oryza sativa subsp. japonica (Rice).